Here is a 142-residue protein sequence, read N- to C-terminus: ATP synthase epsilon chain (142 aa).

Belongs to the ATPase epsilon chain family. As to quaternary structure, F-type ATPases have 2 components, CF(1) - the catalytic core - and CF(0) - the membrane proton channel. CF(1) has five subunits: alpha(3), beta(3), gamma(1), delta(1), epsilon(1). CF(0) has three main subunits: a, b and c.

The protein localises to the cell inner membrane. In terms of biological role, produces ATP from ADP in the presence of a proton gradient across the membrane. The chain is ATP synthase epsilon chain from Shewanella baltica (strain OS185).